The following is a 90-amino-acid chain: Large ribosomal subunit protein bL27 (90 aa).

The segment at 1-24 (MAHKKGTGSTRNGRDSNSKRLGVK) is disordered.

It belongs to the bacterial ribosomal protein bL27 family.

This is Large ribosomal subunit protein bL27 from Prochlorococcus marinus (strain NATL1A).